The sequence spans 257 residues: Phosphomannomutase (257 aa).

Residue aspartate 19 is the Nucleophile of the active site. Residues aspartate 19 and aspartate 21 each coordinate Mg(2+). Catalysis depends on aspartate 21, which acts as the Proton donor/acceptor. Arginine 28, arginine 133, arginine 144, arginine 151, serine 189, and aspartate 191 together coordinate alpha-D-mannose 1-phosphate. Mg(2+)-binding residues include aspartate 219, phenylalanine 231, aspartate 233, and threonine 236.

It belongs to the eukaryotic PMM family. In terms of assembly, homodimer.

It is found in the cytoplasm. It carries out the reaction alpha-D-mannose 1-phosphate = D-mannose 6-phosphate. Its pathway is nucleotide-sugar biosynthesis; GDP-alpha-D-mannose biosynthesis; alpha-D-mannose 1-phosphate from D-fructose 6-phosphate: step 2/2. Functionally, involved in the synthesis of the GDP-mannose and dolichol-phosphate-mannose required for a number of critical mannosyl transfer reactions. This chain is Phosphomannomutase (pmm1), found in Schizosaccharomyces pombe (strain 972 / ATCC 24843) (Fission yeast).